We begin with the raw amino-acid sequence, 343 residues long: Probable dual-specificity RNA methyltransferase RlmN (343 aa).

Glu83 acts as the Proton acceptor in catalysis. The Radical SAM core domain maps to Tyr89–Asp323. A disulfide bridge links Cys96 with Cys328. [4Fe-4S] cluster is bound by residues Cys103, Cys107, and Cys110. Residues Gly153–Glu154, Ser185, Ser209–His211, and Asn285 contribute to the S-adenosyl-L-methionine site. Cys328 (S-methylcysteine intermediate) is an active-site residue.

It belongs to the radical SAM superfamily. RlmN family. [4Fe-4S] cluster serves as cofactor.

It is found in the cytoplasm. The catalysed reaction is adenosine(2503) in 23S rRNA + 2 reduced [2Fe-2S]-[ferredoxin] + 2 S-adenosyl-L-methionine = 2-methyladenosine(2503) in 23S rRNA + 5'-deoxyadenosine + L-methionine + 2 oxidized [2Fe-2S]-[ferredoxin] + S-adenosyl-L-homocysteine. The enzyme catalyses adenosine(37) in tRNA + 2 reduced [2Fe-2S]-[ferredoxin] + 2 S-adenosyl-L-methionine = 2-methyladenosine(37) in tRNA + 5'-deoxyadenosine + L-methionine + 2 oxidized [2Fe-2S]-[ferredoxin] + S-adenosyl-L-homocysteine. In terms of biological role, specifically methylates position 2 of adenine 2503 in 23S rRNA and position 2 of adenine 37 in tRNAs. The chain is Probable dual-specificity RNA methyltransferase RlmN from Deinococcus deserti (strain DSM 17065 / CIP 109153 / LMG 22923 / VCD115).